We begin with the raw amino-acid sequence, 207 residues long: Small ribosomal subunit protein uS4 (207 aa).

Residues 26 to 53 (KPFDVKTKKHAKAPGQHGQARGKQSEYS) form a disordered region. The region spanning 97-159 (SRLDNVVYRM…AKQQLRIKNA (63 aa)) is the S4 RNA-binding domain.

This sequence belongs to the universal ribosomal protein uS4 family. In terms of assembly, part of the 30S ribosomal subunit. Contacts protein S5. The interaction surface between S4 and S5 is involved in control of translational fidelity.

One of the primary rRNA binding proteins, it binds directly to 16S rRNA where it nucleates assembly of the body of the 30S subunit. Functionally, with S5 and S12 plays an important role in translational accuracy. In Acinetobacter baylyi (strain ATCC 33305 / BD413 / ADP1), this protein is Small ribosomal subunit protein uS4.